Here is a 208-residue protein sequence, read N- to C-terminus: Large ribosomal subunit protein uL3 (208 aa).

Residue Gln-149 is modified to N5-methylglutamine.

This sequence belongs to the universal ribosomal protein uL3 family. Part of the 50S ribosomal subunit. Forms a cluster with proteins L14 and L19. In terms of processing, methylated by PrmB.

Functionally, one of the primary rRNA binding proteins, it binds directly near the 3'-end of the 23S rRNA, where it nucleates assembly of the 50S subunit. In Haemophilus ducreyi (strain 35000HP / ATCC 700724), this protein is Large ribosomal subunit protein uL3.